Consider the following 314-residue polypeptide: tRNA pseudouridine synthase B (314 aa).

D47 serves as the catalytic Nucleophile.

The protein belongs to the pseudouridine synthase TruB family. Type 1 subfamily.

The catalysed reaction is uridine(55) in tRNA = pseudouridine(55) in tRNA. Responsible for synthesis of pseudouridine from uracil-55 in the psi GC loop of transfer RNAs. This Vibrio vulnificus (strain CMCP6) protein is tRNA pseudouridine synthase B.